The primary structure comprises 429 residues: Glutamate-1-semialdehyde 2,1-aminomutase 1 (429 aa).

The residue at position 268 (lysine 268) is an N6-(pyridoxal phosphate)lysine.

This sequence belongs to the class-III pyridoxal-phosphate-dependent aminotransferase family. HemL subfamily. As to quaternary structure, homodimer. Pyridoxal 5'-phosphate is required as a cofactor.

It is found in the cytoplasm. It catalyses the reaction (S)-4-amino-5-oxopentanoate = 5-aminolevulinate. Its pathway is porphyrin-containing compound metabolism; protoporphyrin-IX biosynthesis; 5-aminolevulinate from L-glutamyl-tRNA(Glu): step 2/2. In Listeria welshimeri serovar 6b (strain ATCC 35897 / DSM 20650 / CCUG 15529 / CIP 8149 / NCTC 11857 / SLCC 5334 / V8), this protein is Glutamate-1-semialdehyde 2,1-aminomutase 1.